The chain runs to 874 residues: Probable inorganic carbon transporter subunit DabA (874 aa).

Positions 398, 400, 580, and 595 each coordinate Zn(2+).

Belongs to the inorganic carbon transporter (TC 9.A.2) DabA family. Forms a complex with DabB. Requires Zn(2+) as cofactor.

It localises to the cell membrane. Its function is as follows. Part of an energy-coupled inorganic carbon pump. The protein is Probable inorganic carbon transporter subunit DabA of Bacillus cytotoxicus (strain DSM 22905 / CIP 110041 / 391-98 / NVH 391-98).